The sequence spans 422 residues: Phospho-N-acetylmuramoyl-pentapeptide-transferase (422 aa).

9 helical membrane passes run 28–48, 71–91, 95–115, 136–156, 208–228, 239–259, 279–299, 313–333, and 399–419; these read LMAIILSLLISAIFGEYFINL, VGVPTMGGIIIIVAILIPCLL, LHNIYMILMLITTIWLGTLGF, IIGQVGLGLIVGLTLYLSPSV, AQAVGWIIFVLVTIFVVTAVS, GMAAGNSAIIGLTLGILAYVS, LVIFICSFIGALIGFLWYNAF, IGGIIAVFAIIIHKELLIPIL, and KITVRFWIVTIVLAAITIITL.

It belongs to the glycosyltransferase 4 family. MraY subfamily. Requires Mg(2+) as cofactor.

It is found in the cell inner membrane. It catalyses the reaction UDP-N-acetyl-alpha-D-muramoyl-L-alanyl-gamma-D-glutamyl-meso-2,6-diaminopimeloyl-D-alanyl-D-alanine + di-trans,octa-cis-undecaprenyl phosphate = di-trans,octa-cis-undecaprenyl diphospho-N-acetyl-alpha-D-muramoyl-L-alanyl-D-glutamyl-meso-2,6-diaminopimeloyl-D-alanyl-D-alanine + UMP. It functions in the pathway cell wall biogenesis; peptidoglycan biosynthesis. In terms of biological role, catalyzes the initial step of the lipid cycle reactions in the biosynthesis of the cell wall peptidoglycan: transfers peptidoglycan precursor phospho-MurNAc-pentapeptide from UDP-MurNAc-pentapeptide onto the lipid carrier undecaprenyl phosphate, yielding undecaprenyl-pyrophosphoryl-MurNAc-pentapeptide, known as lipid I. The polypeptide is Phospho-N-acetylmuramoyl-pentapeptide-transferase (Phocaeicola vulgatus (strain ATCC 8482 / DSM 1447 / JCM 5826 / CCUG 4940 / NBRC 14291 / NCTC 11154) (Bacteroides vulgatus)).